Consider the following 526-residue polypeptide: Exodeoxyribonuclease 7 large subunit (526 aa).

Residues Ala-499 to Phe-526 form a disordered region.

Belongs to the XseA family. In terms of assembly, heterooligomer composed of large and small subunits.

The protein localises to the cytoplasm. The enzyme catalyses Exonucleolytic cleavage in either 5'- to 3'- or 3'- to 5'-direction to yield nucleoside 5'-phosphates.. In terms of biological role, bidirectionally degrades single-stranded DNA into large acid-insoluble oligonucleotides, which are then degraded further into small acid-soluble oligonucleotides. The sequence is that of Exodeoxyribonuclease 7 large subunit from Sinorhizobium medicae (strain WSM419) (Ensifer medicae).